The following is a 364-amino-acid chain: Peptide chain release factor 1 (364 aa).

Gln230 bears the N5-methylglutamine mark.

This sequence belongs to the prokaryotic/mitochondrial release factor family. Methylated by PrmC. Methylation increases the termination efficiency of RF1.

It localises to the cytoplasm. Its function is as follows. Peptide chain release factor 1 directs the termination of translation in response to the peptide chain termination codons UAG and UAA. This chain is Peptide chain release factor 1, found in Acidothermus cellulolyticus (strain ATCC 43068 / DSM 8971 / 11B).